A 117-amino-acid chain; its full sequence is MAIKKTYRVKRSKDFDQIFSAKHSFANKRFVVYKLNTNQPHFRVGLSVSKKLGHAVLRNRIKRLLRHAVAEFKPYLVDEDFVIIARSGVETLSFEEVKKNLRHVLKLSKIYVDGEND.

This sequence belongs to the RnpA family. Consists of a catalytic RNA component (M1 or rnpB) and a protein subunit.

It carries out the reaction Endonucleolytic cleavage of RNA, removing 5'-extranucleotides from tRNA precursor.. RNaseP catalyzes the removal of the 5'-leader sequence from pre-tRNA to produce the mature 5'-terminus. It can also cleave other RNA substrates such as 4.5S RNA. The protein component plays an auxiliary but essential role in vivo by binding to the 5'-leader sequence and broadening the substrate specificity of the ribozyme. The protein is Ribonuclease P protein component of Lactococcus lactis subsp. cremoris (strain MG1363).